We begin with the raw amino-acid sequence, 885 residues long: Alanine--tRNA ligase (885 aa).

Residues His564, His568, Cys676, and His680 each coordinate Zn(2+).

This sequence belongs to the class-II aminoacyl-tRNA synthetase family. Zn(2+) serves as cofactor.

It is found in the cytoplasm. The catalysed reaction is tRNA(Ala) + L-alanine + ATP = L-alanyl-tRNA(Ala) + AMP + diphosphate. Functionally, catalyzes the attachment of alanine to tRNA(Ala) in a two-step reaction: alanine is first activated by ATP to form Ala-AMP and then transferred to the acceptor end of tRNA(Ala). Also edits incorrectly charged Ser-tRNA(Ala) and Gly-tRNA(Ala) via its editing domain. The sequence is that of Alanine--tRNA ligase from Brucella abortus (strain 2308).